Consider the following 434-residue polypeptide: D-amino acid dehydrogenase (434 aa).

3 to 17 (VLVLGSGVIGTASAY) contacts FAD.

This sequence belongs to the DadA oxidoreductase family. FAD is required as a cofactor.

It carries out the reaction a D-alpha-amino acid + A + H2O = a 2-oxocarboxylate + AH2 + NH4(+). It participates in amino-acid degradation; D-alanine degradation; NH(3) and pyruvate from D-alanine: step 1/1. In terms of biological role, oxidative deamination of D-amino acids. The chain is D-amino acid dehydrogenase from Pseudomonas putida (strain GB-1).